The primary structure comprises 305 residues: Glycine--tRNA ligase alpha subunit (305 aa).

This sequence belongs to the class-II aminoacyl-tRNA synthetase family. Tetramer of two alpha and two beta subunits.

It localises to the cytoplasm. The enzyme catalyses tRNA(Gly) + glycine + ATP = glycyl-tRNA(Gly) + AMP + diphosphate. The polypeptide is Glycine--tRNA ligase alpha subunit (Streptococcus pneumoniae serotype 4 (strain ATCC BAA-334 / TIGR4)).